The following is a 413-amino-acid chain: Sensor protein SphS (413 aa).

Positions 176-398 constitute a Histidine kinase domain; it reads DVAHELKTPL…WLRVQLPQEP (223 aa). Histidine 179 carries the phosphohistidine; by autocatalysis modification.

Its subcellular location is the cytoplasm. It catalyses the reaction ATP + protein L-histidine = ADP + protein N-phospho-L-histidine.. Functionally, member of the two-component regulatory system SphR/SphS. Sensory kinase. Is involved in inducible production of alkaline phosphatase in response to phosphate limitation as it is directly involved in the regulation of phoA transcription in response to phosphate limitation. SphS functions as a protein kinase that phosphorylates SphR. In Synechococcus elongatus (strain ATCC 33912 / PCC 7942 / FACHB-805) (Anacystis nidulans R2), this protein is Sensor protein SphS (sphS).